The sequence spans 418 residues: Serine hydroxymethyltransferase (418 aa).

(6S)-5,6,7,8-tetrahydrofolate-binding positions include leucine 120 and 124–126 (GHL). The residue at position 229 (lysine 229) is an N6-(pyridoxal phosphate)lysine. Residue 353–355 (SPF) participates in (6S)-5,6,7,8-tetrahydrofolate binding.

Belongs to the SHMT family. As to quaternary structure, homodimer. It depends on pyridoxal 5'-phosphate as a cofactor.

The protein localises to the cytoplasm. The enzyme catalyses (6R)-5,10-methylene-5,6,7,8-tetrahydrofolate + glycine + H2O = (6S)-5,6,7,8-tetrahydrofolate + L-serine. Its pathway is one-carbon metabolism; tetrahydrofolate interconversion. It functions in the pathway amino-acid biosynthesis; glycine biosynthesis; glycine from L-serine: step 1/1. Functionally, catalyzes the reversible interconversion of serine and glycine with tetrahydrofolate (THF) serving as the one-carbon carrier. This reaction serves as the major source of one-carbon groups required for the biosynthesis of purines, thymidylate, methionine, and other important biomolecules. Also exhibits THF-independent aldolase activity toward beta-hydroxyamino acids, producing glycine and aldehydes, via a retro-aldol mechanism. The polypeptide is Serine hydroxymethyltransferase (Psychrobacter arcticus (strain DSM 17307 / VKM B-2377 / 273-4)).